We begin with the raw amino-acid sequence, 399 residues long: Leu/Ile/Val-binding protein homolog 7 (399 aa).

An N-terminal signal peptide occupies residues 1–22; it reads MEKHLIALSVAALQAGAAPASA.

This sequence belongs to the leucine-binding protein family.

Its function is as follows. Component of an amino-acid transport system. In Brucella abortus (strain 2308), this protein is Leu/Ile/Val-binding protein homolog 7.